Consider the following 469-residue polypeptide: Soluble pyridine nucleotide transhydrogenase (469 aa).

Position 39–48 (39–48 (ERENSVGGGC)) interacts with FAD.

It belongs to the class-I pyridine nucleotide-disulfide oxidoreductase family. Requires FAD as cofactor.

The protein resides in the cytoplasm. It carries out the reaction NAD(+) + NADPH = NADH + NADP(+). Its function is as follows. Conversion of NADPH, generated by peripheral catabolic pathways, to NADH, which can enter the respiratory chain for energy generation. This Photobacterium profundum (strain SS9) protein is Soluble pyridine nucleotide transhydrogenase.